The primary structure comprises 502 residues: Protein DETOXIFICATION 55 (502 aa).

Helical transmembrane passes span 30 to 50, 61 to 81, 112 to 132, 145 to 165, 185 to 205, 207 to 227, 261 to 283, 298 to 318, 344 to 364, 378 to 398, 419 to 439, and 447 to 467; these read IWDISFPVAAMSILNYLKNMT, LELAGGALAIGFTNITGYSVL, IFLLLLASLPISLLWLNLAPL, VASLYCSFSLPDLLANSFLHP, VSVLLHLPITAFFTFYISLGV, GVAVSSFLTNFISLSLLLCYI, VWSTLVKFAVPSCIAVCLEWWWY, VALAAAAIVIQTTSLMYTIPT, ATVAVGAAVAVSVFGLVGTTV, VVLELTAAVIPVIGACELANC, INFYAFYVVGAPVAVVLAFVW, and CYGLLGAQLACAISILTVVYN.

Belongs to the multi antimicrobial extrusion (MATE) (TC 2.A.66.1) family.

Its subcellular location is the membrane. This Arabidopsis thaliana (Mouse-ear cress) protein is Protein DETOXIFICATION 55.